Reading from the N-terminus, the 453-residue chain is Bifunctional protein GlmU (453 aa).

The interval methionine 1 to arginine 227 is pyrophosphorylase. UDP-N-acetyl-alpha-D-glucosamine-binding positions include leucine 8–glycine 11, lysine 22, glutamine 73, glycine 78–threonine 79, serine 100–aspartate 102, glycine 137, glutamate 152, asparagine 167, and asparagine 225. Position 102 (aspartate 102) interacts with Mg(2+). Asparagine 225 is a Mg(2+) binding site. Positions glutamine 228–glutamate 248 are linker. The tract at residues glycine 249–lysine 453 is N-acetyltransferase. UDP-N-acetyl-alpha-D-glucosamine contacts are provided by arginine 331 and lysine 349. Histidine 361 serves as the catalytic Proton acceptor. The UDP-N-acetyl-alpha-D-glucosamine site is built by tyrosine 364 and asparagine 375. Residues alanine 378, asparagine 384 to tyrosine 385, serine 403, alanine 421, and arginine 438 contribute to the acetyl-CoA site. The disordered stretch occupies residues proline 430–lysine 453.

It in the N-terminal section; belongs to the N-acetylglucosamine-1-phosphate uridyltransferase family. In the C-terminal section; belongs to the transferase hexapeptide repeat family. Homotrimer. Mg(2+) is required as a cofactor.

Its subcellular location is the cytoplasm. The catalysed reaction is alpha-D-glucosamine 1-phosphate + acetyl-CoA = N-acetyl-alpha-D-glucosamine 1-phosphate + CoA + H(+). It catalyses the reaction N-acetyl-alpha-D-glucosamine 1-phosphate + UTP + H(+) = UDP-N-acetyl-alpha-D-glucosamine + diphosphate. It participates in nucleotide-sugar biosynthesis; UDP-N-acetyl-alpha-D-glucosamine biosynthesis; N-acetyl-alpha-D-glucosamine 1-phosphate from alpha-D-glucosamine 6-phosphate (route II): step 2/2. Its pathway is nucleotide-sugar biosynthesis; UDP-N-acetyl-alpha-D-glucosamine biosynthesis; UDP-N-acetyl-alpha-D-glucosamine from N-acetyl-alpha-D-glucosamine 1-phosphate: step 1/1. It functions in the pathway bacterial outer membrane biogenesis; LPS lipid A biosynthesis. Functionally, catalyzes the last two sequential reactions in the de novo biosynthetic pathway for UDP-N-acetylglucosamine (UDP-GlcNAc). The C-terminal domain catalyzes the transfer of acetyl group from acetyl coenzyme A to glucosamine-1-phosphate (GlcN-1-P) to produce N-acetylglucosamine-1-phosphate (GlcNAc-1-P), which is converted into UDP-GlcNAc by the transfer of uridine 5-monophosphate (from uridine 5-triphosphate), a reaction catalyzed by the N-terminal domain. In Nitrosococcus oceani (strain ATCC 19707 / BCRC 17464 / JCM 30415 / NCIMB 11848 / C-107), this protein is Bifunctional protein GlmU.